Reading from the N-terminus, the 221-residue chain is MRLILLGAPGAGKGTQANFIKEKFGIPQISTGDMLRAAVKAGTPLGLEAKRFMDAGELVTDELIINLVKERLQQPDCANGYLFDGFPRTIPQAEAMKQAGVPIDYVLEIDVPFDEIILRMSGRRSHAASGRTYHVKFNPPKVEGVDDMTGEPLIQRDDDKEETVKKRLEVYEAQTKPLIEYYNTWAKNGDSSTPLTAPQYRRISGLGSVDEIRDRAFEALK.

Position 10–15 (10–15) interacts with ATP; it reads GAGKGT. Residues 30 to 59 are NMP; it reads STGDMLRAAVKAGTPLGLEAKRFMDAGELV. AMP is bound by residues threonine 31, arginine 36, 57 to 59, 85 to 88, and glutamine 92; these read ELV and GFPR. An LID region spans residues 122 to 159; sequence GRRSHAASGRTYHVKFNPPKVEGVDDMTGEPLIQRDDD. Residues arginine 123 and 132–133 contribute to the ATP site; that span reads TY. Residues arginine 156 and arginine 167 each contribute to the AMP site. ATP is bound at residue glycine 207.

Belongs to the adenylate kinase family. As to quaternary structure, monomer.

It is found in the cytoplasm. The enzyme catalyses AMP + ATP = 2 ADP. Its pathway is purine metabolism; AMP biosynthesis via salvage pathway; AMP from ADP: step 1/1. Catalyzes the reversible transfer of the terminal phosphate group between ATP and AMP. Plays an important role in cellular energy homeostasis and in adenine nucleotide metabolism. This Paraburkholderia phytofirmans (strain DSM 17436 / LMG 22146 / PsJN) (Burkholderia phytofirmans) protein is Adenylate kinase.